We begin with the raw amino-acid sequence, 60 residues long: UPF0434 protein KPK_3615 (60 aa).

The protein belongs to the UPF0434 family.

The polypeptide is UPF0434 protein KPK_3615 (Klebsiella pneumoniae (strain 342)).